The sequence spans 256 residues: MAYSLPTFPQALPCSSTKTSSSLATFRSPFLRFNGSTSLIPSSISITSRGTSSPTIIPRAAASESDSNEALANTTFHGLCYVLKDNIDTDQIIPAGAACTFPSNQQERDEIAAHALSGLPDFHKTRFIEPGENRSKYSIIIGGENFGCGSSREHAPVCLGAAGAKAIVAESYARIFFRNSVATGEVFPLESEVRVCEECKTGDTVTIELSDSGGLLTNHTTGKNYKLKSIGDAGPVIDAGGIFAYARMMGMIPSLA.

The transit peptide at 1-59 directs the protein to the chloroplast; sequence MAYSLPTFPQALPCSSTKTSSSLATFRSPFLRFNGSTSLIPSSISITSRGTSSPTIIPR.

Belongs to the LeuD family. Heterodimer of the large LEUC/IIL1 subunit and the small LEUD (SSU1, SSU2 or SSU3) subunits. In terms of tissue distribution, expressed in vascular bundles of roots, cotyledons and rosette leaves. Expressed in stem vascular bundles which branche off into lateral inflorescences. Expressed in connective tissues in anthers. In young seedlings, expressed in cotyledon epidermal cells and vasculare bundles. In hypocotyls, expressed in parenchyma cells surrounding the vasculature and further peripheral cells. In seedling roots, expressed in cells along the vasculature. In roots of adult plants, expressed in cells closely associated with the stele. In flowering stalks, expressed in parenchyma cells associated with the phloem or the xylem. Expressed in the vasculature of sepals and petals.

The protein localises to the plastid. The protein resides in the chloroplast stroma. The catalysed reaction is (2R,3S)-3-isopropylmalate = (2S)-2-isopropylmalate. The enzyme catalyses a 2-(omega-methylsulfanyl)alkylmalate = a 2-(omega-methylsulfanyl)alkylmaleate + H2O. It carries out the reaction 2-(3-methylsulfanyl)propylmalate = 2-(2-methylsulfanyl)propylmaleate + H2O. It catalyses the reaction a 3-(omega-methylsulfanyl)alkylmalate = a 2-(omega-methylsulfanyl)alkylmaleate + H2O. The catalysed reaction is 2-(2-methylsulfanyl)ethylmalate = 2-(2-methylsulfanyl)ethylmaleate + H2O. The enzyme catalyses 3-(2-methylsulfanyl)ethylmalate = 2-(2-methylsulfanyl)ethylmaleate + H2O. It carries out the reaction 3-(3-methylsulfanyl)propylmalate = 2-(2-methylsulfanyl)propylmaleate + H2O. It functions in the pathway amino-acid biosynthesis; L-leucine biosynthesis; L-leucine from 3-methyl-2-oxobutanoate: step 2/4. Functionally, catalyzes the isomerization between 2-isopropylmalate and 3-isopropylmalate, via the formation of 2-isopropylmaleate. Functions redundantly with LEUD2 in the methionine chain elongation pathway of aliphatic glucosinolate formation. The protein is 3-isopropylmalate dehydratase small subunit 2 of Arabidopsis thaliana (Mouse-ear cress).